The chain runs to 426 residues: Enolase (426 aa).

Q165 lines the (2R)-2-phosphoglycerate pocket. The Proton donor role is filled by E207. Positions 244, 285, and 312 each coordinate Mg(2+). 4 residues coordinate (2R)-2-phosphoglycerate: K337, R366, S367, and K388. Residue K337 is the Proton acceptor of the active site.

Belongs to the enolase family. Mg(2+) serves as cofactor.

Its subcellular location is the cytoplasm. It is found in the secreted. It localises to the cell surface. It carries out the reaction (2R)-2-phosphoglycerate = phosphoenolpyruvate + H2O. The protein operates within carbohydrate degradation; glycolysis; pyruvate from D-glyceraldehyde 3-phosphate: step 4/5. Catalyzes the reversible conversion of 2-phosphoglycerate (2-PG) into phosphoenolpyruvate (PEP). It is essential for the degradation of carbohydrates via glycolysis. This is Enolase from Thermosynechococcus vestitus (strain NIES-2133 / IAM M-273 / BP-1).